We begin with the raw amino-acid sequence, 543 residues long: Light-independent protochlorophyllide reductase subunit B (543 aa).

A [4Fe-4S] cluster-binding site is contributed by aspartate 36. Residue aspartate 287 is the Proton donor of the active site. Residue 422 to 423 (GL) participates in substrate binding.

Belongs to the ChlB/BchB/BchZ family. Protochlorophyllide reductase is composed of three subunits; BchL, BchN and BchB. Forms a heterotetramer of two BchB and two BchN subunits. Requires [4Fe-4S] cluster as cofactor.

The catalysed reaction is chlorophyllide a + oxidized 2[4Fe-4S]-[ferredoxin] + 2 ADP + 2 phosphate = protochlorophyllide a + reduced 2[4Fe-4S]-[ferredoxin] + 2 ATP + 2 H2O. It functions in the pathway porphyrin-containing compound metabolism; bacteriochlorophyll biosynthesis (light-independent). Its function is as follows. Component of the dark-operative protochlorophyllide reductase (DPOR) that uses Mg-ATP and reduced ferredoxin to reduce ring D of protochlorophyllide (Pchlide) to form chlorophyllide a (Chlide). This reaction is light-independent. The NB-protein (BchN-BchB) is the catalytic component of the complex. This is Light-independent protochlorophyllide reductase subunit B from Rubrivivax gelatinosus (strain NBRC 100245 / IL144).